A 181-amino-acid chain; its full sequence is ATP-dependent protease subunit HslV (181 aa).

Thr7 is an active-site residue. Residues Gly166, Cys169, and Thr172 each contribute to the Na(+) site.

The protein belongs to the peptidase T1B family. HslV subfamily. A double ring-shaped homohexamer of HslV is capped on each side by a ring-shaped HslU homohexamer. The assembly of the HslU/HslV complex is dependent on binding of ATP.

Its subcellular location is the cytoplasm. It carries out the reaction ATP-dependent cleavage of peptide bonds with broad specificity.. Allosterically activated by HslU binding. Protease subunit of a proteasome-like degradation complex believed to be a general protein degrading machinery. The sequence is that of ATP-dependent protease subunit HslV from Acidovorax ebreus (strain TPSY) (Diaphorobacter sp. (strain TPSY)).